A 450-amino-acid chain; its full sequence is Chromosomal replication initiator protein DnaA (450 aa).

A domain I, interacts with DnaA modulators region spans residues 1–84 (MTENEQIFWN…AVDYVYEEDL (84 aa)). The tract at residues 84–109 (LIIEQQHQGQQGYTEQAFQQLPAVQS) is domain II. The domain III, AAA+ region stretch occupies residues 110–328 (DLNPKYSFDN…GALKDISLVA (219 aa)). 4 residues coordinate ATP: Gly-154, Gly-156, Lys-157, and Thr-158. The domain IV, binds dsDNA stretch occupies residues 329–450 (NFKQIDTITV…EIETIKNKIK (122 aa)).

Belongs to the DnaA family. In terms of assembly, oligomerizes as a right-handed, spiral filament on DNA at oriC.

The protein resides in the cytoplasm. Its function is as follows. Plays an essential role in the initiation and regulation of chromosomal replication. ATP-DnaA binds to the origin of replication (oriC) to initiate formation of the DNA replication initiation complex once per cell cycle. Binds the DnaA box (a 9 base pair repeat at the origin) and separates the double-stranded (ds)DNA. Forms a right-handed helical filament on oriC DNA; dsDNA binds to the exterior of the filament while single-stranded (ss)DNA is stabiized in the filament's interior. The ATP-DnaA-oriC complex binds and stabilizes one strand of the AT-rich DNA unwinding element (DUE), permitting loading of DNA polymerase. After initiation quickly degrades to an ADP-DnaA complex that is not apt for DNA replication. Binds acidic phospholipids. This Streptococcus equi subsp. zooepidemicus (strain MGCS10565) protein is Chromosomal replication initiator protein DnaA.